Reading from the N-terminus, the 245-residue chain is Biosynthetic peptidoglycan transglycosylase (245 aa).

Residues 29–49 (LLVAFLILSLVLVATVSVINP) traverse the membrane as a helical segment.

The protein belongs to the glycosyltransferase 51 family.

It is found in the cell inner membrane. It carries out the reaction [GlcNAc-(1-&gt;4)-Mur2Ac(oyl-L-Ala-gamma-D-Glu-L-Lys-D-Ala-D-Ala)](n)-di-trans,octa-cis-undecaprenyl diphosphate + beta-D-GlcNAc-(1-&gt;4)-Mur2Ac(oyl-L-Ala-gamma-D-Glu-L-Lys-D-Ala-D-Ala)-di-trans,octa-cis-undecaprenyl diphosphate = [GlcNAc-(1-&gt;4)-Mur2Ac(oyl-L-Ala-gamma-D-Glu-L-Lys-D-Ala-D-Ala)](n+1)-di-trans,octa-cis-undecaprenyl diphosphate + di-trans,octa-cis-undecaprenyl diphosphate + H(+). The protein operates within cell wall biogenesis; peptidoglycan biosynthesis. Functionally, peptidoglycan polymerase that catalyzes glycan chain elongation from lipid-linked precursors. The protein is Biosynthetic peptidoglycan transglycosylase of Shewanella amazonensis (strain ATCC BAA-1098 / SB2B).